The chain runs to 417 residues: Ribonuclease T2-like (417 aa).

An N-terminal signal peptide occupies residues 1–22 (MSSISGFLGAIPGAQQILQTMA). 5 disulfide bridges follow: C45–C63, C52–C99, C62–C165, C107–C157, and C229–C264. The active site involves H92. N115 carries an N-linked (GlcNAc...) asparagine glycan. Residues E150 and H154 contribute to the active site. The segment at 274–296 (KTPNKDPGHGHEPTKTRHPHGPT) is disordered. Over residues 276 to 288 (PNKDPGHGHEPTK) the composition is skewed to basic and acidic residues. N383 is a glycosylation site (N-linked (GlcNAc...) asparagine).

Belongs to the RNase T2 family.

The protein localises to the vacuole lumen. Its subcellular location is the cytoplasm. The catalysed reaction is a ribonucleotidyl-ribonucleotide-RNA + H2O = a 3'-end 3'-phospho-ribonucleotide-RNA + a 5'-end dephospho-ribonucleoside-RNA + H(+). Rnase which modulates cell survival under stress conditions. Released from the vacuole to the cytoplasm during stress to promote tRNA and rRNA cleavage and to activate separately a downstream pathway that promotes cell death. Involved in cell size, vacuolar morphology and growth at high temperatures and high salt concentration. The sequence is that of Ribonuclease T2-like (rny1) from Emericella nidulans (strain FGSC A4 / ATCC 38163 / CBS 112.46 / NRRL 194 / M139) (Aspergillus nidulans).